Consider the following 73-residue polypeptide: MPQTQELDQRIAELEMKIAFQENTLEELNQALIDQQFVLDKMQLQLRYMASKLKDLQSSNIASQAEETPPPHY.

The protein belongs to the SlyX family.

This Histophilus somni (strain 2336) (Haemophilus somnus) protein is Protein SlyX homolog.